The primary structure comprises 527 residues: Tetanolysin (527 aa).

The signal sequence occupies residues 1–32 (MNKNVLKFVSRSLLIFSMTGLISNYNSSNVLA). The next 4 beta stranded transmembrane spans lie at 215–228 (QSQL…NFKA), 235–244 (IDFDSIFKGE), 313–322 (SSHVKAAFKA), and 330–342 (SSNA…LNQS). The Conserved undecapeptide motif lies at 484-494 (ECTGLAWEWWR). The Cholesterol binding motif lies at 516-517 (TL).

It belongs to the cholesterol-dependent cytolysin family. Homooligomeric pore complex containing 35-50 subunits; when inserted in the host membrane. Post-translationally, purified 48 and 53 kDa proteins with 4 different pIs (6.1, 5.6, 5.3 and 6.6) in decreasing order of activity.

It is found in the secreted. The protein resides in the host cell membrane. Cytolysis of host cells is inhibited by cholesterol. A cholesterol-dependent toxin that causes cytolysis by forming pores in cholesterol-containing host membranes. After binding to target membranes, the protein undergoes a major conformation change, leading to its insertion in the host membrane and formation of an oligomeric pore complex. Cholesterol is required for binding to host membranes, membrane insertion and pore formation; cholesterol binding is mediated by a Thr-Leu pair in the C-terminus. This chain is Tetanolysin, found in Clostridium tetani (strain Massachusetts / E88).